Reading from the N-terminus, the 369-residue chain is uncharacterized protein (369 aa).

A disordered region spans residues 1–35 (MQTNNPSYFFRSESALQDEKRKEEKSHNPNGNPRN). Basic and acidic residues predominate over residues 17 to 27 (QDEKRKEEKSH). 6 WD repeats span residues 83–127 (GHSG…CVET), 130–169 (GHTDYVKCLLLLEEEGLLLSGSTDASLIVWDVSSQPSRLL), 174–213 (GHSRGIECITRQPNTDIFWTCGSESSIRCWHITKVGGSQL), 220–260 (GHQS…HEET), 263–301 (EHPDVCTDVLTLADGNIATACRDEEIRVWDTTTGNVKDI), and 304–341 (GHYESVTKILQWKSYLISSSLDQTIRVWDLEYSADNNE).

This is an uncharacterized protein from Schizosaccharomyces pombe (strain 972 / ATCC 24843) (Fission yeast).